We begin with the raw amino-acid sequence, 618 residues long: Sphingomyelin phosphodiesterase 2 (618 aa).

A signal peptide spans 1-22 (MQQPLIILGIGIVLALVSNVES). One can recognise a Saposin B-type domain in the interval 68 to 151 (RKMSCLFCTF…AFIANCGHSD (84 aa)). 3 disulfide bridges follow: Cys72–Cys147, Cys75–Cys140, and Cys103–Cys114. An N-linked (GlcNAc...) asparagine glycan is attached at Asn89. Asn159 is a glycosylation site (N-linked (GlcNAc...) asparagine). Residues Asp189 and His191 each coordinate Zn(2+). Intrachain disulfides connect Cys204/Cys216 and Cys217/Cys249. A Zn(2+)-binding site is contributed by Asp278. Asn298 is a glycosylation site (N-linked (GlcNAc...) asparagine). Positions 318, 427, 461, and 463 each coordinate Zn(2+). A disulfide bridge connects residues Cys387 and Cys435. N-linked (GlcNAc...) asparagine glycans are attached at residues Asn525 and Asn568. Cystine bridges form between Cys588-Cys594 and Cys600-Cys613.

It belongs to the acid sphingomyelinase family. Requires Zn(2+) as cofactor.

The protein localises to the secreted. It carries out the reaction a sphingomyelin + H2O = phosphocholine + an N-acylsphing-4-enine + H(+). The catalysed reaction is an N-acyl-15-methylhexadecasphing-4-enine-1-phosphocholine + H2O = an N-acyl-15-methylhexadecasphing-4-enine + phosphocholine + H(+). Its pathway is lipid metabolism; sphingolipid metabolism. Sphingomyelin phosphodiesterase (sphingomyelinase) that converts sphingomyelin (N-acyl-sphingoid-1-phosphocholine) to ceramide (N-acyl-sphingoid base) and phosphocholine at acidic pH. Displays its enzymatic activity when secreted. May play distinct roles in signaling. The protein is Sphingomyelin phosphodiesterase 2 (asm-2) of Caenorhabditis elegans.